The sequence spans 353 residues: MNGDQKLDAYAQERQDFIQHFSQIVKVLTEEDIGHPEIGDAITRLKEVLEYNAIGGKYNRGLTVVITFRELVEPGKQDPDSLQRALTVGWCVELLQAFFLVSDDIMDSSLTRRGQTCWYQKPGIGLDAINDAFLLESSIYRLLKLYCREQPYYLDLIELFLQSSYQTEIGQTLDLITAPQGNVDLGRFTEKRYKSIVKYKTAFYSFYLPVAAAMYMAGIDGEKEHAHAKKILLEMGEFFQIQDDYLDLFGDPSMTGKIGTDIQDNKCSWLVVQCLQRASPEQRQILQENYGQKEAEKVARVKALYEEMNLSAVYMQYEEDSYNHIMGLIEQYAAPLPPAIFLGLAQKIYKRKK.

3 residues coordinate isopentenyl diphosphate: lysine 57, arginine 60, and glutamine 96. At lysine 57 the chain carries N6-(2-hydroxyisobutyryl)lysine; alternate. Lysine 57 is subject to N6-acetyllysine; alternate. Residues aspartate 103 and aspartate 107 each contribute to the Mg(2+) site. Arginine 112 contacts dimethylallyl diphosphate. Arginine 113 contributes to the isopentenyl diphosphate binding site. Residues lysine 200, threonine 201, glutamine 240, lysine 257, and lysine 266 each contribute to the dimethylallyl diphosphate site.

It belongs to the FPP/GGPP synthase family. As to quaternary structure, homodimer. Interacts with RSAD2. Interacts with bovine leukemia virus (BLV) protein G4. Requires Mg(2+) as cofactor.

The protein resides in the cytoplasm. The enzyme catalyses isopentenyl diphosphate + dimethylallyl diphosphate = (2E)-geranyl diphosphate + diphosphate. It carries out the reaction isopentenyl diphosphate + (2E)-geranyl diphosphate = (2E,6E)-farnesyl diphosphate + diphosphate. The protein operates within isoprenoid biosynthesis; farnesyl diphosphate biosynthesis; farnesyl diphosphate from geranyl diphosphate and isopentenyl diphosphate: step 1/1. It participates in isoprenoid biosynthesis; geranyl diphosphate biosynthesis; geranyl diphosphate from dimethylallyl diphosphate and isopentenyl diphosphate: step 1/1. With respect to regulation, inactivated by interferon-induced RSAD2. This inactivation may result of disruption of lipid rafts at the plasma membrane, and thus have an antiviral effect since many enveloped viruses need lipid rafts to bud efficiently out of the cell. Its function is as follows. Key enzyme in isoprenoid biosynthesis which catalyzes the formation of farnesyl diphosphate (FPP), a precursor for several classes of essential metabolites including sterols, dolichols, carotenoids, and ubiquinones. FPP also serves as substrate for protein farnesylation and geranylgeranylation. Catalyzes the sequential condensation of isopentenyl pyrophosphate with the allylic pyrophosphates, dimethylallyl pyrophosphate, and then with the resultant geranylpyrophosphate to the ultimate product farnesyl pyrophosphate. This Bos taurus (Bovine) protein is Farnesyl pyrophosphate synthase (FDPS).